The following is a 250-amino-acid chain: Eukaryotic translation initiation factor 2 subunit 2 (250 aa).

A C4-type zinc finger spans residues 193 to 217 (CHTCKSPETQLTKDTRLFFLQCTNC).

Belongs to the eIF-2-beta/eIF-5 family. As to quaternary structure, eukaryotic translation initiation factor 2 eIF2 is a heterotrimeric complex composed of an alpha, a beta and a gamma subunit.

Its subcellular location is the cytoplasm. It is found in the cytosol. Its function is as follows. Component of the eIF2 complex that functions in the early steps of protein synthesis by forming a ternary complex with GTP and initiator tRNA. This complex binds to a 40S ribosomal subunit, followed by mRNA binding to form a 43S pre-initiation complex (43S PIC). Junction of the 60S ribosomal subunit to form the 80S initiation complex is preceded by hydrolysis of the GTP bound to eIF2 and release of an eIF2-GDP binary complex. In order for eIF2 to recycle and catalyze another round of initiation, the GDP bound to eIF2 must exchange with GTP by way of a reaction catalyzed by eIF2B. This Caenorhabditis elegans protein is Eukaryotic translation initiation factor 2 subunit 2.